Here is a 321-residue protein sequence, read N- to C-terminus: NADPH-dependent codeinone reductase 1-2 (321 aa).

NADPH contacts are provided by T27 and D51. Active-site proton donor residues include Y56 and H119. A substrate-binding site is contributed by H119. NADPH is bound by residues S165, Q187, S214, L216, S264, and R269. The interval 299-321 is disordered; it reads SADFLLSPTGPFKTEEEFWDEKD.

Belongs to the aldo/keto reductase family. In terms of tissue distribution, latex secreting cells (laticifer cells). Expressed constitutively in all organs with highest levels in capsules. Restricted to the parietal region of sieve elements adjacent or proximal to laticifers in roots, stems, leaves and carpels.

The protein localises to the cytoplasm. It localises to the cytosol. It carries out the reaction codeine + NADP(+) = codeinone + NADPH + H(+). The enzyme catalyses neopine + NADP(+) = neopinone + NADPH + H(+). It catalyses the reaction morphine + NADP(+) = morphinone + NADPH + H(+). The catalysed reaction is neomorphine + NADP(+) = neomorphinone + NADPH + H(+). It functions in the pathway alkaloid biosynthesis; morphine biosynthesis. NADPH-dependent codeinone reductase involved in biosynthesis of morphinan-type benzylisoquinoline and opiate alkaloids natural products. Reduces codeinone to codeine in the penultimate step in morphine biosynthesis. Can use morphinone, hydrocodone and hydromorphone as substrate during reductive reaction with NADPH as cofactor, and morphine and dihydrocodeine as substrate during oxidative reaction with NADP as cofactor. Converts morphinone to morphine, and neomorphinone to neomorphine. Reduces irreversibly neopinone, a spontaneous isomer of codeinone, to neopine; in planta, neopine levels are limited to low levels. The sequence is that of NADPH-dependent codeinone reductase 1-2 from Papaver somniferum (Opium poppy).